A 406-amino-acid chain; its full sequence is L-carnitine CoA-transferase (406 aa).

The CoA site is built by Lys98 and Arg105. The active-site Nucleophile is the Asp170.

Belongs to the CoA-transferase III family. CaiB subfamily. As to quaternary structure, homodimer.

Its subcellular location is the cytoplasm. It catalyses the reaction crotonobetainyl-CoA + (R)-carnitine = crotonobetaine + (R)-carnitinyl-CoA. The catalysed reaction is 4-(trimethylamino)butanoyl-CoA + (R)-carnitine = (R)-carnitinyl-CoA + 4-(trimethylamino)butanoate. It functions in the pathway amine and polyamine metabolism; carnitine metabolism. In terms of biological role, catalyzes the reversible transfer of the CoA moiety from gamma-butyrobetainyl-CoA to L-carnitine to generate L-carnitinyl-CoA and gamma-butyrobetaine. Is also able to catalyze the reversible transfer of the CoA moiety from gamma-butyrobetainyl-CoA or L-carnitinyl-CoA to crotonobetaine to generate crotonobetainyl-CoA. The chain is L-carnitine CoA-transferase from Proteus mirabilis (strain HI4320).